The primary structure comprises 395 residues: Phosphoserine aminotransferase (395 aa).

Thr-20 bears the Phosphothreonine mark. Residue 80 to 81 (GT) coordinates pyridoxal 5'-phosphate. Ser-112 is modified (phosphoserine). Positions 113, 170, 194, and 217 each coordinate pyridoxal 5'-phosphate. N6-(pyridoxal phosphate)lysine is present on Lys-218. 271 to 272 (NT) lines the pyridoxal 5'-phosphate pocket.

Belongs to the class-V pyridoxal-phosphate-dependent aminotransferase family. SerC subfamily. As to quaternary structure, homodimer. Pyridoxal 5'-phosphate serves as cofactor.

It catalyses the reaction O-phospho-L-serine + 2-oxoglutarate = 3-phosphooxypyruvate + L-glutamate. The enzyme catalyses 4-(phosphooxy)-L-threonine + 2-oxoglutarate = (R)-3-hydroxy-2-oxo-4-phosphooxybutanoate + L-glutamate. It functions in the pathway amino-acid biosynthesis; L-serine biosynthesis; L-serine from 3-phospho-D-glycerate: step 2/3. In terms of biological role, phosphoserine aminotransferase (PSAT) is a pyridoxal 5'-phosphate-dependent enzyme involved in the second step of the phosphorylated pathway of serine biosynthesis. Catalyzes the reversible conversion of 3-phosphohydroxypyruvate to phosphoserine and of 3-hydroxy-2-oxo-4-phosphonooxybutanoate to phosphohydroxythreonine. Plays an indirect role in purine biosynthesis. The polypeptide is Phosphoserine aminotransferase (Saccharomyces cerevisiae (strain ATCC 204508 / S288c) (Baker's yeast)).